Reading from the N-terminus, the 478-residue chain is Sodium-coupled neutral amino acid transporter 5 (478 aa).

Residues 1 to 20 (MAISSAEGMELQDPKMNGAL) form a disordered region. The Cytoplasmic portion of the chain corresponds to 1-57 (MAISSAEGMELQDPKMNGALPGNAVEQEHEGFLPSHSPSPGRKPAQFMDFEGKTSFG). The chain crosses the membrane as a helical span at residues 58-80 (MSVFNLSNAIMGSGILGLAYAMA). At 81–93 (HTGILLFLALLLC) the chain is on the extracellular side. A helical transmembrane segment spans residues 94–114 (IALLSSYSIHLLLTCAGVVGI). Over 115–131 (RAYEQLGQRALGPAGKV) the chain is Cytoplasmic. The helical transmembrane segment at 132–152 (VVAAVICLHNVGAMSSYLFII) threads the bilayer. Residues 153-172 (KSELPLVIATFLDMDPEGDW) are Extracellular-facing. A helical transmembrane segment spans residues 173–193 (FLKGNLLIIIVSVLIILPLAL). Over 194–198 (MRHLG) the chain is Cytoplasmic. Residues 199 to 219 (YLGYTSGLSLTCMLFFLISVI) form a helical membrane-spanning segment. The Extracellular portion of the chain corresponds to 220-263 (YKKFQLGCTVGHNGTAVESKSSPSLPIHGLNTSCEAQMFTADSQ). A disulfide bridge connects residues Cys227 and Cys253. Asn232 carries an N-linked (GlcNAc...) asparagine glycan. Residues 264 to 284 (MFYTVPIMAFAFVCHPEVLPI) traverse the membrane as a helical segment. Over 285–301 (YTELCRPSKRRMQAVAN) the chain is Cytoplasmic. Residues 302–322 (VSIGAMFCMYGLTATFGYLTF) form a helical membrane-spanning segment. At 323 to 340 (YSSVEAEMLHMYSQHDLL) the chain is on the extracellular side. The chain crosses the membrane as a helical span at residues 341–361 (ILCVRLAVLLAVTLTVPVVLF). Over 362 to 382 (PIRRALQQLLFPSKAFSWPRH) the chain is Cytoplasmic. The chain crosses the membrane as a helical span at residues 383–403 (VAIALILLVLVNVLVICVPTI). The Extracellular segment spans residues 404 to 405 (RD). A helical transmembrane segment spans residues 406–426 (IFGVIGSTSAPSLIFILPSIF). Residues 427-445 (YLRIVPSEVEPLYSWPKIQ) lie on the Cytoplasmic side of the membrane. Residues 446-466 (ALCFGVLGVLFMAISLGFMFA) traverse the membrane as a helical segment. The Extracellular segment spans residues 467 to 478 (NWATGQSHVSGH).

This sequence belongs to the amino acid/polyamine transporter 2 family.

It localises to the cell membrane. The enzyme catalyses L-serine(out) + Na(+)(out) + H(+)(in) = L-serine(in) + Na(+)(in) + H(+)(out). It carries out the reaction L-alanine(out) + Na(+)(out) + H(+)(in) = L-alanine(in) + Na(+)(in) + H(+)(out). It catalyses the reaction glycine(out) + Na(+)(out) + H(+)(in) = glycine(in) + Na(+)(in) + H(+)(out). The catalysed reaction is L-glutamine(out) + Na(+)(out) + H(+)(in) = L-glutamine(in) + Na(+)(in) + H(+)(out). The enzyme catalyses L-asparagine(out) + Na(+)(out) + H(+)(in) = L-asparagine(in) + Na(+)(in) + H(+)(out). It carries out the reaction L-histidine(out) + Na(+)(out) + H(+)(in) = L-histidine(in) + Na(+)(in) + H(+)(out). It catalyses the reaction L-cysteine(out) + Na(+)(out) + H(+)(in) = L-cysteine(in) + Na(+)(in) + H(+)(out). Not inhibited by lithium. Partial allosteric regulation on ions sodium binding. Its function is as follows. Symporter that cotransports neutral amino acids and sodium ions, coupled to an H(+) antiporter activity. Releases L-glutamine and glycine from astroglial cells and may participate in the glutamate/GABA-glutamine cycle and the NMDA receptors activation. In addition contributes significantly to L-glutamine uptake in retina, namely in ganglion and Mueller cells and, therefore participates in the retinal glutamate-glutamine cycle. The transport activity is pH sensitive, Li(+) tolerant, bidirectional and associated with large uncoupled fluxes of protons. The transport is electroneutral coupled to the cotransport of 1 Na(+) and the antiport of 1 H(+). May have particular importance for modulation of net hepatic glutamine flux. The sequence is that of Sodium-coupled neutral amino acid transporter 5 from Bos taurus (Bovine).